A 331-amino-acid polypeptide reads, in one-letter code: FMRFamide-related neuropeptides (331 aa).

Positions 1 to 25 are cleaved as a signal peptide; it reads MRCWSPCSLLVVIAIYCLSSHTSEA. The propeptide occupies 26-65; sequence FDLAQACVESQRLSLLPICDTIFAVQQEGAQQSADDGLRS. Phe71 and Phe83 each carry phenylalanine amide. A propeptide spanning residues 86–94 is cleaved from the precursor; it reads NVPDLPFED. Residue Phe100 is modified to Phenylalanine amide. Positions 103–168 are excised as a propeptide; it reads AAPQLDDLLK…YVDDVEDSDV (66 aa). The segment at 122–153 is disordered; the sequence is QKSDDTSVRRKRSTDAAPQSNTDSAEQKNDSA. Phe174 and Phe181 each carry phenylalanine amide. The propeptide occupies 184 to 194; it reads NPSDVGSKLTE. Phe200 carries the phenylalanine amide modification. Positions 203–205 are excised as a propeptide; that stretch reads DPE. At Phe211 the chain carries Phenylalanine amide. Positions 214–216 are excised as a propeptide; that stretch reads SDD. Phe222 is subject to Phenylalanine amide. A propeptide spanning residues 225-236 is cleaved from the precursor; it reads NPGDAEDELEED. A Phenylalanine amide modification is found at Phe242. A propeptide spanning residues 245 to 254 is cleaved from the precursor; the sequence is GDEEDEEEAE. Position 260 is a phenylalanine amide (Phe260). Positions 263–265 are excised as a propeptide; the sequence is DPE. Phe271 is subject to Phenylalanine amide. Residues 274 to 277 constitute a propeptide that is removed on maturation; the sequence is NGEE. Phe283 is subject to Phenylalanine amide. The propeptide occupies 286-293; it reads NPEEPEAD. A Phenylalanine amide modification is found at Phe299. Positions 302-312 are excised as a propeptide; it reads GGEEDDVNTEE. Phenylalanine amide is present on Phe318. A propeptide spanning residues 321–331 is cleaved from the precursor; that stretch reads SAEKCKGCLEG.

This sequence belongs to the FARP (FMRFamide related peptide) family. As to expression, present ubiquitously in the brain and regions of the central nervous system as well as in the periphery and throughout the dermal chromatophore layer (at protein level).

The protein resides in the secreted. Excitatory neurotransmitters that directly modulate chromatophore function by activating chromatophore expansion at the chromatophore neuromuscular junction. This is FMRFamide-related neuropeptides from Sepia officinalis (Common cuttlefish).